We begin with the raw amino-acid sequence, 662 residues long: Transketolase (662 aa).

H28 is a binding site for substrate. Thiamine diphosphate contacts are provided by residues H68 and 115–117; that span reads GPL. D156 contacts Mg(2+). Positions 157 and 186 each coordinate thiamine diphosphate. The Mg(2+) site is built by N186 and I188. Positions 261, 356, and 383 each coordinate substrate. H261 is a thiamine diphosphate binding site. E410 functions as the Proton donor in the catalytic mechanism. F436 is a thiamine diphosphate binding site. Residues H460, D468, and R519 each contribute to the substrate site.

This sequence belongs to the transketolase family. Homodimer. Mg(2+) serves as cofactor. Ca(2+) is required as a cofactor. The cofactor is Mn(2+). Requires Co(2+) as cofactor. It depends on thiamine diphosphate as a cofactor.

The enzyme catalyses D-sedoheptulose 7-phosphate + D-glyceraldehyde 3-phosphate = aldehydo-D-ribose 5-phosphate + D-xylulose 5-phosphate. It participates in carbohydrate biosynthesis; Calvin cycle. Its pathway is carbohydrate degradation; pentose phosphate pathway. Its function is as follows. Catalyzes the transfer of a two-carbon ketol group from a ketose donor to an aldose acceptor, via a covalent intermediate with the cofactor thiamine pyrophosphate. The protein is Transketolase (tkt) of Staphylococcus aureus (strain MRSA252).